Here is a 338-residue protein sequence, read N- to C-terminus: Lipoate-protein ligase A (338 aa).

Residues 29-216 (PATQRVLFLW…AFFAHYGEHV (188 aa)) form the BPL/LPL catalytic domain. Residues arginine 71, 76–79 (GAVF), and lysine 134 contribute to the ATP site. Lysine 134 is a (R)-lipoate binding site.

Belongs to the LplA family. In terms of assembly, monomer.

It is found in the cytoplasm. The catalysed reaction is L-lysyl-[lipoyl-carrier protein] + (R)-lipoate + ATP = N(6)-[(R)-lipoyl]-L-lysyl-[lipoyl-carrier protein] + AMP + diphosphate + H(+). It participates in protein modification; protein lipoylation via exogenous pathway; protein N(6)-(lipoyl)lysine from lipoate: step 1/2. Its pathway is protein modification; protein lipoylation via exogenous pathway; protein N(6)-(lipoyl)lysine from lipoate: step 2/2. Its function is as follows. Catalyzes both the ATP-dependent activation of exogenously supplied lipoate to lipoyl-AMP and the transfer of the activated lipoyl onto the lipoyl domains of lipoate-dependent enzymes. This chain is Lipoate-protein ligase A, found in Escherichia coli O17:K52:H18 (strain UMN026 / ExPEC).